A 698-amino-acid chain; its full sequence is Elongation factor G (698 aa).

Residues 10–285 (DKTRNIGIMA…AVVDYLPSPL (276 aa)) enclose the tr-type G domain. Residues 19-26 (AHIDAGKT), 83-87 (DTPGH), and 137-140 (NKMD) each bind GTP.

This sequence belongs to the TRAFAC class translation factor GTPase superfamily. Classic translation factor GTPase family. EF-G/EF-2 subfamily.

It is found in the cytoplasm. Its function is as follows. Catalyzes the GTP-dependent ribosomal translocation step during translation elongation. During this step, the ribosome changes from the pre-translocational (PRE) to the post-translocational (POST) state as the newly formed A-site-bound peptidyl-tRNA and P-site-bound deacylated tRNA move to the P and E sites, respectively. Catalyzes the coordinated movement of the two tRNA molecules, the mRNA and conformational changes in the ribosome. The polypeptide is Elongation factor G (Lactiplantibacillus plantarum (strain ATCC BAA-793 / NCIMB 8826 / WCFS1) (Lactobacillus plantarum)).